Here is a 284-residue protein sequence, read N- to C-terminus: Alpha-S1-casein (284 aa).

The first 15 residues, 1 to 15, serve as a signal peptide directing secretion; that stretch reads MKLLILTCLVAAALA. Disordered stretches follow at residues 21–44 and 78–111; these read RRNAVSSQTQQENSSSEEQEIVKQ and SSAEEQATASAQEDSSSSSSSSEESKDAIPSATE. Low complexity-rich tracts occupy residues 24–36 and 78–99; these read AVSSQTQQENSSS and SSAEEQATASAQEDSSSSSSSS. 8 positions are modified to phosphoserine: Ser79, Ser93, Ser94, Ser95, Ser96, Ser97, Ser98, and Ser99. 10 tandem repeats follow at residues 138-143, 144-149, 150-155, 156-161, 162-167, 168-173, 174-179, 180-185, 186-191, and 192-197. The interval 138–197 is 10 X 6 AA tandem repeats; the sequence is LLQQASLAQQASLAQQASLAQQALLAQQPSLAQQAALAQQASLAQQASLAQQASLAQKHH.

It belongs to the alpha-casein family. As to expression, mammary gland specific. Secreted in milk.

The protein resides in the secreted. Its function is as follows. Important role in the capacity of milk to transport calcium phosphate. In Rattus norvegicus (Rat), this protein is Alpha-S1-casein (Csn1s1).